The following is a 74-amino-acid chain: Putative defensin-like protein 27 (74 aa).

The signal sequence occupies residues 1–19; that stretch reads MVHPRFVFFAFLALSVLLA. Cystine bridges form between cysteine 36-cysteine 74, cysteine 46-cysteine 65, cysteine 51-cysteine 70, and cysteine 55-cysteine 72.

It belongs to the DEFL family.

The protein localises to the secreted. This chain is Putative defensin-like protein 27, found in Arabidopsis thaliana (Mouse-ear cress).